A 291-amino-acid chain; its full sequence is ATP synthase gamma chain (291 aa).

This sequence belongs to the ATPase gamma chain family. As to quaternary structure, F-type ATPases have 2 components, CF(1) - the catalytic core - and CF(0) - the membrane proton channel. CF(1) has five subunits: alpha(3), beta(3), gamma(1), delta(1), epsilon(1). CF(0) has three main subunits: a, b and c.

It is found in the cell inner membrane. Functionally, produces ATP from ADP in the presence of a proton gradient across the membrane. The gamma chain is believed to be important in regulating ATPase activity and the flow of protons through the CF(0) complex. The protein is ATP synthase gamma chain of Chlorobium limicola (strain DSM 245 / NBRC 103803 / 6330).